The primary structure comprises 163 residues: Small ribosomal subunit protein uS5 (163 aa).

Positions 8 to 71 (LIEKIVDLNR…ERAKKGMVQV (64 aa)) constitute an S5 DRBM domain.

This sequence belongs to the universal ribosomal protein uS5 family. In terms of assembly, part of the 30S ribosomal subunit. Contacts proteins S4 and S8.

Functionally, with S4 and S12 plays an important role in translational accuracy. Located at the back of the 30S subunit body where it stabilizes the conformation of the head with respect to the body. This chain is Small ribosomal subunit protein uS5, found in Oleidesulfovibrio alaskensis (strain ATCC BAA-1058 / DSM 17464 / G20) (Desulfovibrio alaskensis).